Here is an 863-residue protein sequence, read N- to C-terminus: Leucine--tRNA ligase (863 aa).

The 'HIGH' region signature appears at 42–52; the sequence is PYPSGKLHMGH. The 'KMSKS' region motif lies at 623–627; that stretch reads KMSKS. K626 serves as a coordination point for ATP.

This sequence belongs to the class-I aminoacyl-tRNA synthetase family.

It localises to the cytoplasm. It carries out the reaction tRNA(Leu) + L-leucine + ATP = L-leucyl-tRNA(Leu) + AMP + diphosphate. This is Leucine--tRNA ligase from Paraburkholderia xenovorans (strain LB400).